A 119-amino-acid chain; its full sequence is Dihydroneopterin aldolase (119 aa).

Substrate-binding positions include Glu-21, Tyr-53, and 72–73 (IE). The active-site Proton donor/acceptor is Lys-99.

This sequence belongs to the DHNA family.

It catalyses the reaction 7,8-dihydroneopterin = 6-hydroxymethyl-7,8-dihydropterin + glycolaldehyde. It participates in cofactor biosynthesis; tetrahydrofolate biosynthesis; 2-amino-4-hydroxy-6-hydroxymethyl-7,8-dihydropteridine diphosphate from 7,8-dihydroneopterin triphosphate: step 3/4. Functionally, catalyzes the conversion of 7,8-dihydroneopterin to 6-hydroxymethyl-7,8-dihydropterin. The protein is Dihydroneopterin aldolase (folB) of Streptococcus pyogenes serotype M1.